A 293-amino-acid chain; its full sequence is Ribosomal protein L11 methyltransferase (293 aa).

Residues threonine 145, glycine 166, aspartate 188, and asparagine 230 each contribute to the S-adenosyl-L-methionine site.

It belongs to the methyltransferase superfamily. PrmA family.

The protein resides in the cytoplasm. It catalyses the reaction L-lysyl-[protein] + 3 S-adenosyl-L-methionine = N(6),N(6),N(6)-trimethyl-L-lysyl-[protein] + 3 S-adenosyl-L-homocysteine + 3 H(+). Its function is as follows. Methylates ribosomal protein L11. This Pasteurella multocida (strain Pm70) protein is Ribosomal protein L11 methyltransferase.